Consider the following 83-residue polypeptide: NAD(P)H-quinone oxidoreductase subunit L (83 aa).

Helical transmembrane passes span 18–38 (IGGYVALGGLYLVVMPLLLFF) and 53–73 (FSVYGLVFFFFPGMIVFAPFL).

The protein belongs to the complex I NdhL subunit family. As to quaternary structure, NDH-1 can be composed of about 15 different subunits; different subcomplexes with different compositions have been identified which probably have different functions.

The protein localises to the cellular thylakoid membrane. The catalysed reaction is a plastoquinone + NADH + (n+1) H(+)(in) = a plastoquinol + NAD(+) + n H(+)(out). It catalyses the reaction a plastoquinone + NADPH + (n+1) H(+)(in) = a plastoquinol + NADP(+) + n H(+)(out). Functionally, NDH-1 shuttles electrons from an unknown electron donor, via FMN and iron-sulfur (Fe-S) centers, to quinones in the respiratory and/or the photosynthetic chain. The immediate electron acceptor for the enzyme in this species is believed to be plastoquinone. Couples the redox reaction to proton translocation, and thus conserves the redox energy in a proton gradient. Cyanobacterial NDH-1 also plays a role in inorganic carbon-concentration. This is NAD(P)H-quinone oxidoreductase subunit L from Synechococcus sp. (strain CC9311).